The primary structure comprises 95 residues: Aspartyl/glutamyl-tRNA(Asn/Gln) amidotransferase subunit C (95 aa).

The protein belongs to the GatC family. In terms of assembly, heterotrimer of A, B and C subunits.

It catalyses the reaction L-glutamyl-tRNA(Gln) + L-glutamine + ATP + H2O = L-glutaminyl-tRNA(Gln) + L-glutamate + ADP + phosphate + H(+). The catalysed reaction is L-aspartyl-tRNA(Asn) + L-glutamine + ATP + H2O = L-asparaginyl-tRNA(Asn) + L-glutamate + ADP + phosphate + 2 H(+). Its function is as follows. Allows the formation of correctly charged Asn-tRNA(Asn) or Gln-tRNA(Gln) through the transamidation of misacylated Asp-tRNA(Asn) or Glu-tRNA(Gln) in organisms which lack either or both of asparaginyl-tRNA or glutaminyl-tRNA synthetases. The reaction takes place in the presence of glutamine and ATP through an activated phospho-Asp-tRNA(Asn) or phospho-Glu-tRNA(Gln). The polypeptide is Aspartyl/glutamyl-tRNA(Asn/Gln) amidotransferase subunit C (Desulfosudis oleivorans (strain DSM 6200 / JCM 39069 / Hxd3) (Desulfococcus oleovorans)).